The following is a 357-amino-acid chain: DNA integrity scanning protein DisA (357 aa).

A DAC domain is found at 8 to 146 (VKSMINILQL…GNLRYTLKDI (139 aa)). Residues glycine 75, leucine 93, and 106-110 (MRHRT) contribute to the ATP site.

This sequence belongs to the DisA family. Homooctamer. Mg(2+) serves as cofactor.

It carries out the reaction 2 ATP = 3',3'-c-di-AMP + 2 diphosphate. Functionally, participates in a DNA-damage check-point that is active prior to asymmetric division when DNA is damaged. DisA forms globular foci that rapidly scan along the chromosomes during sporulation, searching for lesions. When a lesion is present, DisA pauses at the lesion site. This triggers a cellular response that culminates in a temporary block in sporulation initiation. Its function is as follows. Also has diadenylate cyclase activity, catalyzing the condensation of 2 ATP molecules into cyclic di-AMP (c-di-AMP). c-di-AMP acts as a signaling molecule that couples DNA integrity with progression of sporulation. The rise in c-di-AMP level generated by DisA while scanning the chromosome, operates as a positive signal that advances sporulation; upon encountering a lesion, the DisA focus arrests at the damaged site and halts c-di-AMP synthesis. The sequence is that of DNA integrity scanning protein DisA from Bacillus anthracis (strain CDC 684 / NRRL 3495).